We begin with the raw amino-acid sequence, 427 residues long: Glutamate-1-semialdehyde 2,1-aminomutase 2 (427 aa).

K267 carries the N6-(pyridoxal phosphate)lysine modification.

It belongs to the class-III pyridoxal-phosphate-dependent aminotransferase family. HemL subfamily. Homodimer. The cofactor is pyridoxal 5'-phosphate.

Its subcellular location is the cytoplasm. The enzyme catalyses (S)-4-amino-5-oxopentanoate = 5-aminolevulinate. The protein operates within porphyrin-containing compound metabolism; protoporphyrin-IX biosynthesis; 5-aminolevulinate from L-glutamyl-tRNA(Glu): step 2/2. The polypeptide is Glutamate-1-semialdehyde 2,1-aminomutase 2 (Staphylococcus haemolyticus (strain JCSC1435)).